The chain runs to 32 residues: Tail virion protein G9P (32 aa).

A helical transmembrane segment spans residues 8–24 (FASFVLGWCLRSGITYF).

The protein belongs to the inovirus G9P protein family.

Its subcellular location is the virion. The protein localises to the host membrane. Its function is as follows. May initiate with G7P the virion concomitant assembly-budding process, by interacting with the packaging signal of the viral genome. The assembly-budding takes place at the host inner membrane. In turn, G7P and G9P are present at the end of the filamentous virion that emerges first from the bacterial host. This chain is Tail virion protein G9P (IX), found in Escherichia coli (Bacteriophage f1).